The primary structure comprises 196 residues: Recombination protein RecR (196 aa).

The C4-type zinc-finger motif lies at 57-72; it reads CERCHTFTEGAVCETC. Residues 80–175 form the Toprim domain; that stretch reads TRLCVVETPA…HVTRLARGVP (96 aa).

The protein belongs to the RecR family.

May play a role in DNA repair. It seems to be involved in an RecBC-independent recombinational process of DNA repair. It may act with RecF and RecO. This is Recombination protein RecR from Acidovorax sp. (strain JS42).